The primary structure comprises 257 residues: Ribosomal RNA small subunit methyltransferase J (257 aa).

S-adenosyl-L-methionine contacts are provided by residues 107-108, 123-124, and D177; these read RD and ER.

Belongs to the methyltransferase superfamily. RsmJ family.

It localises to the cytoplasm. It carries out the reaction guanosine(1516) in 16S rRNA + S-adenosyl-L-methionine = N(2)-methylguanosine(1516) in 16S rRNA + S-adenosyl-L-homocysteine + H(+). In terms of biological role, specifically methylates the guanosine in position 1516 of 16S rRNA. The chain is Ribosomal RNA small subunit methyltransferase J from Haemophilus influenzae (strain ATCC 51907 / DSM 11121 / KW20 / Rd).